The sequence spans 602 residues: GTP-binding protein 1 (602 aa).

Residue serine 2 is modified to Phosphoserine. The region spanning 91–322 is the tr-type G domain; the sequence is FLEVRVAVVG…LNLLSPRTSY (232 aa). The G1 stretch occupies residues 100-107; it reads GNVDAGKS. 100 to 107 serves as a coordination point for GTP; the sequence is GNVDAGKS. The segment at 139-143 is G2; that stretch reads GRTSS. A G3 region spans residues 185–188; it reads DLAG. Residues 185–189 and 241–244 contribute to the GTP site; these read DLAGH and TKID. Residues 241–244 form a G4 region; it reads TKID. The G5 stretch occupies residues 299–301; sequence SNV. Residues 506-528 show a composition bias toward polar residues; sequence LLQTTNNSPMNSKPQQIKMQSTK. The segment at 506–602 is disordered; it reads LLQTTNNSPM…GACVTPASGC (97 aa). At serine 513 the chain carries Phosphoserine. Basic residues predominate over residues 579–589; the sequence is GRRRGGQRYKV.

It belongs to the TRAFAC class translation factor GTPase superfamily. Classic translation factor GTPase family. GTPBP1 subfamily. As to quaternary structure, interacts with EXOSC2/RRP4, EXOSC3/RRP40, EXOSC5/RRP46, HNRNPD, HNRNPR and SYNCRIP. Identified in a complex with AANAT mRNA, but does not bind mRNA by itself.

The protein localises to the cytoplasm. Functionally, promotes degradation of target mRNA species. Plays a role in the regulation of circadian mRNA stability. Binds GTP and has GTPase activity. The protein is GTP-binding protein 1 (GTPBP1) of Pongo abelii (Sumatran orangutan).